The chain runs to 453 residues: AP-4 complex subunit mu-1 (453 aa).

Positions lysine 184–arginine 452 constitute an MHD domain. Residues proline 383–glycine 403 are disordered.

Belongs to the adaptor complexes medium subunit family. Adaptor protein complex 4 (AP-4) is a heterotetramer composed of two large adaptins (epsilon-type subunit AP4E1 and beta-type subunit AP4B1), a medium adaptin (mu-type subunit AP4M1) and a small adaptin (sigma-type AP4S1). Interacts with tyrosine-based sorting signals on the cytoplasmic tail of cargo proteins such as APP, ATG9A, LAMP2 and NAGPA. Interacts with the C-terminal domain of GRID2. Interacts with GRIA1 and GRIA2; the interaction is indirect via CACNG3. Interacts with CACNG3; CACNG3 associates GRIA1 and GRIA2 with the adaptor protein complex 4 (AP-4) to target them to the somatodendritic compartment of neurons. Interacts with HOOK1 and HOOK2; the interactions are direct, mediate the interaction between FTS-Hook-FHIP (FHF) complex and AP-4 and the perinuclear distribution of AP-4. In terms of tissue distribution, high levels in the olfactory bulb, the cerebral cortex, the granule and Purkinje cell layers of the cerebellar cortex and the CA3 region of the hippocampus. Low levels found in molecular layer of cerebellum.

The protein localises to the golgi apparatus. It localises to the trans-Golgi network membrane. The protein resides in the early endosome. Functionally, component of the adaptor protein complex 4 (AP-4). Adaptor protein complexes are vesicle coat components involved both in vesicle formation and cargo selection. They control the vesicular transport of proteins in different trafficking pathways. AP-4 forms a non clathrin-associated coat on vesicles departing the trans-Golgi network (TGN) and may be involved in the targeting of proteins from the trans-Golgi network (TGN) to the endosomal-lysosomal system. It is also involved in protein sorting to the basolateral membrane in epithelial cells and the proper asymmetric localization of somatodendritic proteins in neurons. Within AP-4, the mu-type subunit AP4M1 is directly involved in the recognition and binding of tyrosine-based sorting signals found in the cytoplasmic part of cargos. The adaptor protein complex 4 (AP-4) may also recognize other types of sorting signal. In Rattus norvegicus (Rat), this protein is AP-4 complex subunit mu-1.